The primary structure comprises 351 residues: Cyclic AMP-dependent transcription factor ATF-4 (351 aa).

Lysine 53 is covalently cross-linked (Glycyl lysine isopeptide (Lys-Gly) (interchain with G-Cter in SUMO2)). Positions 210-268 (EEDTPSDNDSGICMSPESYLGSPQHSPSTRGSPNRSLPSPGVLCGSARPKPYDPPGEKM) are disordered. Phosphothreonine is present on threonine 213. A Phosphoserine; by CK2 modification is found at serine 215. Positions 215–224 (SDNDSGICMS) match the BetaTrCP degron motif motif. Phosphoserine is present on residues serine 219, serine 224, serine 231, and serine 235. The span at 230-246 (GSPQHSPSTRGSPNRSL) shows a compositional bias: polar residues. At proline 236 the chain carries 4-hydroxyproline. Phosphoserine; by RPS6KA3 is present on serine 245. Serine 248 carries the phosphoserine modification. Glycyl lysine isopeptide (Lys-Gly) (interchain with G-Cter in SUMO2) cross-links involve residues lysine 259, lysine 267, and lysine 272. Residues 278–341 (LDKKLKKMEQ…QYLKDLIEEV (64 aa)) form the bZIP domain. The tract at residues 280–300 (KKLKKMEQNKTAATRYRQKKR) is basic motif. Residues 280 to 340 (KKLKKMEQNK…IQYLKDLIEE (61 aa)) adopt a coiled-coil conformation. The interval 305–341 (ALTGECKELEKKNEALKERADSLAKEIQYLKDLIEEV) is interaction with GABBR1. Residues 306–334 (LTGECKELEKKNEALKERADSLAKEIQYL) form a leucine-zipper region. Lysine 311 is modified (N6-acetyllysine).

Belongs to the bZIP family. In terms of assembly, binds DNA as a homodimer and as a heterodimer. Heterodimer; heterodimerizes with CEBPB. Heterodimer; heterodimerizes with DDIT3/CHOP. Interacts with CEP290 (via an N-terminal region). Interacts with NEK6, DAPK2 (isoform 2) and ZIPK/DAPK3. Interacts (via its leucine zipper domain) with GABBR1 and GABBR2 (via their C-termini). Forms a heterodimer with TXLNG in osteoblasts. Interacts (via its DNA binding domain) with FOXO1 (C-terminal half); the interaction occurs in osteoblasts and regulates glucose homeostasis through suppression of beta-cell proliferation and a decrease in insulin production. Interacts with SATB2; the interaction results in enhanced DNA binding and transactivation by these transcription factors. Interacts with ABRAXAS2. Interacts with TRIB3, inhibiting the transactivation activity of ATF4. Interacts with DISC1; which inhibits ATF4 transcription factor activity by disrupting ATF4 dimerization and DNA-binding. Interacts with EP300/p300; EP300/p300 stabilizes ATF4 and increases its transcriptional activity independently of its catalytic activity by preventing its ubiquitination. Post-translationally, ubiquitinated by SCF(BTRC) in response to mTORC1 signal, followed by proteasomal degradation and leading to down-regulate expression of SIRT4. Interaction with EP300/p300 inhibits ubiquitination by SCF(BTRC). Phosphorylation at Ser-245 by RPS6KA3/RSK2 in osteoblasts enhances transactivation activity and promotes osteoblast differentiation. Phosphorylated on the betaTrCP degron motif at Ser-219, followed by phosphorylation at Thr-213, Ser-224, Ser-231, Ser-235 and Ser-248, promoting interaction with BTRC and ubiquitination. Phosphorylation is promoted by mTORC1. Phosphorylation at Ser-215 by CK2 decreases its stability. Phosphorylated by NEK6. In terms of processing, hydroxylated by PHD3, leading to decreased protein stability.

It is found in the nucleus. The protein localises to the nucleus speckle. It localises to the cytoplasm. The protein resides in the cell membrane. Its subcellular location is the cytoskeleton. It is found in the microtubule organizing center. The protein localises to the centrosome. Transcription factor that binds the cAMP response element (CRE) (consensus: 5'-GTGACGT[AC][AG]-3') and displays two biological functions, as regulator of metabolic and redox processes under normal cellular conditions, and as master transcription factor during integrated stress response (ISR). Binds to asymmetric CRE's as a heterodimer and to palindromic CRE's as a homodimer. Core effector of the ISR, which is required for adaptation to various stress such as endoplasmic reticulum (ER) stress, amino acid starvation, mitochondrial stress or oxidative stress. During ISR, ATF4 translation is induced via an alternative ribosome translation re-initiation mechanism in response to EIF2S1/eIF-2-alpha phosphorylation, and stress-induced ATF4 acts as a master transcription factor of stress-responsive genes in order to promote cell recovery. Promotes the transcription of genes linked to amino acid sufficiency and resistance to oxidative stress to protect cells against metabolic consequences of ER oxidation. Activates the transcription of NLRP1, possibly in concert with other factors in response to ER stress. Activates the transcription of asparagine synthetase (ASNS) in response to amino acid deprivation or ER stress. However, when associated with DDIT3/CHOP, the transcriptional activation of the ASNS gene is inhibited in response to amino acid deprivation. Together with DDIT3/CHOP, mediates programmed cell death by promoting the expression of genes involved in cellular amino acid metabolic processes, mRNA translation and the terminal unfolded protein response (terminal UPR), a cellular response that elicits programmed cell death when ER stress is prolonged and unresolved. Activates the expression of COX7A2L/SCAF1 downstream of the EIF2AK3/PERK-mediated unfolded protein response, thereby promoting formation of respiratory chain supercomplexes and increasing mitochondrial oxidative phosphorylation. Together with DDIT3/CHOP, activates the transcription of the IRS-regulator TRIB3 and promotes ER stress-induced neuronal cell death by regulating the expression of BBC3/PUMA in response to ER stress. May cooperate with the UPR transcriptional regulator QRICH1 to regulate ER protein homeostasis which is critical for cell viability in response to ER stress. In the absence of stress, ATF4 translation is at low levels and it is required for normal metabolic processes such as embryonic lens formation, fetal liver hematopoiesis, bone development and synaptic plasticity. Acts as a regulator of osteoblast differentiation in response to phosphorylation by RPS6KA3/RSK2: phosphorylation in osteoblasts enhances transactivation activity and promotes expression of osteoblast-specific genes and post-transcriptionally regulates the synthesis of Type I collagen, the main constituent of the bone matrix. Cooperates with FOXO1 in osteoblasts to regulate glucose homeostasis through suppression of beta-cell production and decrease in insulin production. Activates transcription of SIRT4. Regulates the circadian expression of the core clock component PER2 and the serotonin transporter SLC6A4. Binds in a circadian time-dependent manner to the cAMP response elements (CRE) in the SLC6A4 and PER2 promoters and periodically activates the transcription of these genes. Mainly acts as a transcriptional activator in cellular stress adaptation, but it can also act as a transcriptional repressor: acts as a regulator of synaptic plasticity by repressing transcription, thereby inhibiting induction and maintenance of long-term memory. Regulates synaptic functions via interaction with DISC1 in neurons, which inhibits ATF4 transcription factor activity by disrupting ATF4 dimerization and DNA-binding. Functionally, (Microbial infection) Binds to a Tax-responsive enhancer element in the long terminal repeat of HTLV-I. This chain is Cyclic AMP-dependent transcription factor ATF-4, found in Homo sapiens (Human).